The primary structure comprises 201 residues: Adenylyl-sulfate kinase (201 aa).

The disordered stretch occupies residues Met1–His23. Residue Gly35–Ser42 participates in ATP binding. The active-site Phosphoserine intermediate is the Ser109.

Belongs to the APS kinase family.

It carries out the reaction adenosine 5'-phosphosulfate + ATP = 3'-phosphoadenylyl sulfate + ADP + H(+). The protein operates within sulfur metabolism; hydrogen sulfide biosynthesis; sulfite from sulfate: step 2/3. Catalyzes the synthesis of activated sulfate. The polypeptide is Adenylyl-sulfate kinase (Escherichia coli O6:K15:H31 (strain 536 / UPEC)).